The following is a 121-amino-acid chain: Splicing factor 3B subunit 6 (121 aa).

Positions 12–25 (EVNRLLYVRNLPYK) are interaction with pre-mRNA branch site. The region spanning 15-90 (RLLYVRNLPY…RYLVVLYYQS (76 aa)) is the RRM domain.

It belongs to the SF3B6 family. As to quaternary structure, component of splicing factor SF3B complex. Component of the U11/U12 snRNPs that are part of the U12-type spliceosome.

It is found in the nucleus. Involved in pre-mRNA splicing as a component of the splicing factor SF3B complex. SF3B complex is required for 'A' complex assembly formed by the stable binding of U2 snRNP to the branchpoint sequence (BPS) in pre-mRNA. Directly contacts the pre-mRNA branch site adenosine for the first catalytic step of splicing. Enters the spliceosome and associates with the pre-mRNA branch site as part of the 17S U2 or, in the case of the minor spliceosome, as part of the 18S U11/U12 snRNP complex, and thus may facilitate the interaction of these snRNP with the branch sites of U2 and U12 respectively. The polypeptide is Splicing factor 3B subunit 6 (Drosophila melanogaster (Fruit fly)).